Here is a 224-residue protein sequence, read N- to C-terminus: Phosphoribosylformylglycinamidine synthase subunit PurQ (224 aa).

A Glutamine amidotransferase type-1 domain is found at 3–224; it reads FGVVVFPGSN…GLLEKVVALA (222 aa). Residue Cys-86 is the Nucleophile of the active site. Catalysis depends on residues His-195 and Glu-197.

As to quaternary structure, part of the FGAM synthase complex composed of 1 PurL, 1 PurQ and 2 PurS subunits.

The protein localises to the cytoplasm. The catalysed reaction is N(2)-formyl-N(1)-(5-phospho-beta-D-ribosyl)glycinamide + L-glutamine + ATP + H2O = 2-formamido-N(1)-(5-O-phospho-beta-D-ribosyl)acetamidine + L-glutamate + ADP + phosphate + H(+). It catalyses the reaction L-glutamine + H2O = L-glutamate + NH4(+). It participates in purine metabolism; IMP biosynthesis via de novo pathway; 5-amino-1-(5-phospho-D-ribosyl)imidazole from N(2)-formyl-N(1)-(5-phospho-D-ribosyl)glycinamide: step 1/2. Part of the phosphoribosylformylglycinamidine synthase complex involved in the purines biosynthetic pathway. Catalyzes the ATP-dependent conversion of formylglycinamide ribonucleotide (FGAR) and glutamine to yield formylglycinamidine ribonucleotide (FGAM) and glutamate. The FGAM synthase complex is composed of three subunits. PurQ produces an ammonia molecule by converting glutamine to glutamate. PurL transfers the ammonia molecule to FGAR to form FGAM in an ATP-dependent manner. PurS interacts with PurQ and PurL and is thought to assist in the transfer of the ammonia molecule from PurQ to PurL. The sequence is that of Phosphoribosylformylglycinamidine synthase subunit PurQ from Trichormus variabilis (strain ATCC 29413 / PCC 7937) (Anabaena variabilis).